The following is a 338-amino-acid chain: MSDYSSLILRYWYSNQPSRWLLTPLSGLFQLAVKIRQWAYTQGLFHTHILPLPVLVIGNLTLGGTGKTPLVIWLAQFLRQHGYRPGLISRGYGGHAQNYPQQVYPDSDPHLVGDEAVLLARRTGCPLVVGPDRVAASHALLAHSDCNVLLSDDGLQHYALGRDIEILVVDGVRRFGNAHCLPAGPLREPLSRLRTVDLVVTNGMPQGGEFAMYSQLQDARHIKDGTLRPLKKFRRTKLHGVAGIGNPERFFSQLRALELTIQPHPFPDHYGFQSEDLAFADQQPVLMTEKDAVKCIRFARDNYWYVPMDVSLPASFGAQVLSLLQQAAKKKLNIETTG.

61–68 contacts ATP; sequence TLGGTGKT.

It belongs to the LpxK family.

The catalysed reaction is a lipid A disaccharide + ATP = a lipid IVA + ADP + H(+). The protein operates within glycolipid biosynthesis; lipid IV(A) biosynthesis; lipid IV(A) from (3R)-3-hydroxytetradecanoyl-[acyl-carrier-protein] and UDP-N-acetyl-alpha-D-glucosamine: step 6/6. Functionally, transfers the gamma-phosphate of ATP to the 4'-position of a tetraacyldisaccharide 1-phosphate intermediate (termed DS-1-P) to form tetraacyldisaccharide 1,4'-bis-phosphate (lipid IVA). This Nitrosococcus oceani (strain ATCC 19707 / BCRC 17464 / JCM 30415 / NCIMB 11848 / C-107) protein is Tetraacyldisaccharide 4'-kinase.